The chain runs to 131 residues: Snaclec coagulation factor IX/factor X-binding protein subunit A (131 aa).

The C-type lectin domain occupies 1-131 (DCLPGWSSHE…EEPQRFTCEI (131 aa)). 3 disulfides stabilise this stretch: C2–C13, C30–C129, and C104–C121. The Ca(2+) site is built by S41, E43, and E47. E130 contributes to the Ca(2+) binding site.

This sequence belongs to the snaclec family. In terms of assembly, heterodimer of subunits A and B; disulfide-linked. Expressed by the venom gland.

The protein resides in the secreted. Functionally, anticoagulant protein which binds to coagulation factor IX (F9) and coagulation factor X (F10) in the presence of calcium. It may bind the gamma-carboxyglutamic acid-domain regions of factors with a 1 to 1 stoichiometry. The dissociation constant (K(d)) are 6.6 nM for factor IX (F9) and 125 nM for factor X (F10). Does not bind carbohydrates. This is Snaclec coagulation factor IX/factor X-binding protein subunit A from Echis carinatus (Saw-scaled viper).